A 577-amino-acid chain; its full sequence is Monooxygenase PC-14 (577 aa).

This sequence belongs to the FMO family. It depends on FAD as a cofactor.

Its pathway is secondary metabolite biosynthesis. Functionally, monooxygenase; part of the gene cluster that mediates the biosynthesis of the indole diterpenes penitrems. The geranylgeranyl diphosphate (GGPP) synthase penG catalyzes the first step in penitrem biosynthesis via conversion of farnesyl pyrophosphate and isopentyl pyrophosphate into geranylgeranyl pyrophosphate (GGPP). Condensation of indole-3-glycerol phosphate with GGPP by the prenyl transferase penC then forms 3-geranylgeranylindole (3-GGI). Epoxidation by the FAD-dependent monooxygenase penM leads to a epoxidized-GGI that is substrate of the terpene cyclase penB for cyclization to yield paspaline. Paspaline is subsequently converted to 13-desoxypaxilline by the cytochrome P450 monooxygenase penP, the latter being then converted to paxilline by the cytochrome P450 monooxygenase penQ. Paxilline is converted to beta-paxitriol via C-10 ketoreduction by the short-chain dehydrogenase PC-15 which can be monoprenylated at the C-20 by the indole diterpene prenyltransferase penD. A two-step elimination (acetylation and elimination) process performed by the O-acetyltransferase PC-16 and the P.simplicissimum ptmI-ortholog not yet identified in P.crustosum, leads to the production of the prenylated form of penijanthine. The FAD-linked oxidoreductase ptmO then converts the prenylated form of penijanthine into PC-M5 which is in turn transformed into PC-M4 by the aromatic dimethylallyltransferase PC-22. A series of oxidation steps involving 4 cytochrome P450 monooxygenases (PC-21, PC-05, PC-23, PC-20) and a FAD-dependent monooxygenase (PC-14) are required for the transformation of PC-M4 to penitrems A and E. Synthesis of these final products is proposed to proceed via penitrems D and C (PC-21, PC-05, PC-14) and penitrems B and F (PC-21, PC-05, PC-14, PC-23). This Penicillium crustosum (Blue mold fungus) protein is Monooxygenase PC-14.